The primary structure comprises 191 residues: MTTPTAARHMVNFITGNTNKLCEVRAILQPAIQVESQTLDLIEIQGTLEEVTLDKCRRAADLVEGPVLVEDTCLCFNALNGLPGPYIKWFMKSLGHTGLNNLLAAYEDKSAQAVCTFAYSAGPGHEPILFQGITDGKIVPARGPGDFGWDAIFEYEGQTYAEMDKAAKNKISHRYRALAKLQEWFAKEMAP.

Residue 15–20 (TGNTNK) participates in ITP binding. Glu-43 is a binding site for Mg(2+). ITP is bound by residues Lys-55, 71 to 72 (DT), Lys-88, 147 to 150 (FGWD), Lys-168, and 173 to 174 (HR).

Belongs to the HAM1 NTPase family. As to quaternary structure, homodimer. The cofactor is Mg(2+). Mn(2+) serves as cofactor.

It localises to the cytoplasm. Its subcellular location is the nucleus. The catalysed reaction is ITP + H2O = IMP + diphosphate + H(+). It catalyses the reaction dITP + H2O = dIMP + diphosphate + H(+). The enzyme catalyses XTP + H2O = XMP + diphosphate + H(+). Functionally, pyrophosphatase that hydrolyzes non-canonical purine nucleotides such as inosine triphosphate (ITP), deoxyinosine triphosphate (dITP) or xanthosine 5'-triphosphate (XTP) to their respective monophosphate derivatives. The enzyme does not distinguish between the deoxy- and ribose forms. Probably excludes non-canonical purines from RNA and DNA precursor pools, thus preventing their incorporation into RNA and DNA and avoiding chromosomal lesions. The sequence is that of Inosine triphosphate pyrophosphatase from Chaetomium globosum (strain ATCC 6205 / CBS 148.51 / DSM 1962 / NBRC 6347 / NRRL 1970) (Soil fungus).